Here is a 781-residue protein sequence, read N- to C-terminus: Toll-like receptor 2 type-2 (781 aa).

Residues 1–24 (MHTWKMWAICTALAAHLPEEQALR) form the signal peptide. Topologically, residues 25-585 (QACLSCDATQ…QLSLMECHRS (561 aa)) are extracellular. C30 and C36 are disulfide-bonded. N37 is a glycosylation site (N-linked (GlcNAc...) asparagine). 6 LRR repeats span residues 53-74 (KITVLNLAHNRIKVIRTHDLQK), 77-98 (NLRTLLLQSNQISSIDEDSFGS), 101-122 (KLELLDLSNNSLAHLSPVWFGP), 125-146 (SLQHLRIQGNSYSDLGESSPFS), 150-171 (NLSSLHLGNPQFSIIRQGNFEG), and 174-195 (FLNTLRIDGDNLSQYEPGSLKS). N-linked (GlcNAc...) asparagine glycosylation is present at N109. N-linked (GlcNAc...) asparagine glycosylation is found at N150, N184, N301, and N313. Cysteines 350 and 379 form a disulfide. LRR repeat units follow at residues 358–378 (SLEYLDLSANLLGDQSLEHSA), 385–406 (SLQTLNLSQNSLSDLKMTGKSL), 411–432 (NLNLLDISENNFGEIPDMCEWP), 434–455 (NLKYLNLSSTQIPKLTTCIPST), 456–474 (LEVLDVSANNLQDFGLQLP), 475–496 (FLKELYLTKNHLKTLPEATDIP), and 497–518 (NLVAMSISRNKLNSFSKEEFES). An N-linked (GlcNAc...) asparagine glycan is attached at N390. A disulfide bond links C429 and C451. A glycan (N-linked (GlcNAc...) asparagine) is linked at N439. Residues 530-584 (NNFICSCEFLSFIHHEAGIAQVLVGWPESYICDSPLTVRGAQVGSVQLSLMECHR) form the LRRCT domain. A helical membrane pass occupies residues 586–606 (LLVSLICTLVFLFILILVVVG). At 607–781 (YKYHAVWYMR…WENLKAALKS (175 aa)) the chain is on the cytoplasmic side. In terms of domain architecture, TIR spans 636 to 779 (ICYDAFVSYS…MFWENLKAAL (144 aa)).

This sequence belongs to the Toll-like receptor family. In terms of assembly, binds MYD88 (via TIR domain). N-glycosylated. As to expression, highly expressed in ovary. Also detected in brain, heart, lung, liver, spleen and kidney, and at low levels in gizzard, muscle, testis and proventriculus.

Its subcellular location is the membrane. Its function is as follows. Participates in the innate immune response to microbial agents. Acts via MYD88 and TRAF6, leading to NF-kappa-B activation, cytokine secretion and the inflammatory response. Mediates the response to mycoplasmal macrophage-activating lipopeptide-2kD (MALP-2). The polypeptide is Toll-like receptor 2 type-2 (TLR2-2) (Gallus gallus (Chicken)).